A 347-amino-acid chain; its full sequence is Quinolinate synthase (347 aa).

Residues His-47 and Ser-68 each coordinate iminosuccinate. Cys-113 contacts [4Fe-4S] cluster. Residues 139–141 (YAN) and Ser-156 each bind iminosuccinate. A [4Fe-4S] cluster-binding site is contributed by Cys-200. Iminosuccinate is bound by residues 226–228 (HPE) and Thr-243. Cys-297 lines the [4Fe-4S] cluster pocket.

It belongs to the quinolinate synthase family. Type 1 subfamily. Requires [4Fe-4S] cluster as cofactor.

The protein localises to the cytoplasm. It catalyses the reaction iminosuccinate + dihydroxyacetone phosphate = quinolinate + phosphate + 2 H2O + H(+). Its pathway is cofactor biosynthesis; NAD(+) biosynthesis; quinolinate from iminoaspartate: step 1/1. Its function is as follows. Catalyzes the condensation of iminoaspartate with dihydroxyacetone phosphate to form quinolinate. The chain is Quinolinate synthase from Shigella flexneri serotype 5b (strain 8401).